The sequence spans 354 residues: MGHLLMLWVAAGMCYPALGASAWSVNNFLITRPKAYLTYTASVALGAQIGIEECKFQFAWERWNCPEHAFQFSTHNRLRAATRETSFIHAIRSAAIMYAVTKNCSMGDLENCGCDESQNGKTGGHGWIWGGCSDNVEFGEKISRLFVDSLEKGKDARALVNLHNNRAGRLAVRASTKRTCKCHGISGSCSIQTCWLQLADFRQMGNYLKAKYDRALKIEMDKRQLRAGNRAEGRWALTEAFLPSTEAELIFLEGSPDYCNRNASLSIQGTEGRECLQNARSASRREQRSCGRLCTECGLQVEERRAEAVSSCDCNFQWCCTVKCGQCRRVVSRYYCTRPVGSARPRGRGKDSAW.

The first 19 residues, 1–19 (MGHLLMLWVAAGMCYPALG), serve as a signal peptide directing secretion. A disulfide bond links cysteine 54 and cysteine 65. Asparagine 103 carries an N-linked (GlcNAc...) asparagine glycan. 10 disulfide bridges follow: cysteine 104/cysteine 112, cysteine 114/cysteine 132, cysteine 180/cysteine 194, cysteine 182/cysteine 189, cysteine 259/cysteine 297, cysteine 275/cysteine 290, cysteine 294/cysteine 336, cysteine 312/cysteine 327, cysteine 314/cysteine 324, and cysteine 319/cysteine 320. Serine 186 carries the O-palmitoleoyl serine lipid modification. Asparagine 262 carries an N-linked (GlcNAc...) asparagine glycan.

It belongs to the Wnt family. In terms of assembly, forms a soluble 1:1 complex with AFM; this prevents oligomerization and is required for prolonged biological activity. The complex with AFM may represent the physiological form in body fluids. In terms of processing, palmitoleoylation is required for efficient binding to frizzled receptors. Depalmitoleoylation leads to Wnt signaling pathway inhibition. Post-translationally, proteolytic processing by TIKI1 and TIKI2 promotes oxidation and formation of large disulfide-bond oligomers, leading to inactivation of WNT8A.

The protein localises to the secreted. The protein resides in the extracellular space. It is found in the extracellular matrix. Its function is as follows. Ligand for members of the frizzled family of seven transmembrane receptors. Plays a role in embryonic patterning. The polypeptide is Protein Wnt-8a (Wnt8a) (Mus musculus (Mouse)).